A 95-amino-acid chain; its full sequence is Large ribosomal subunit protein bL25 (95 aa).

This sequence belongs to the bacterial ribosomal protein bL25 family. Part of the 50S ribosomal subunit; part of the 5S rRNA/L5/L18/L25 subcomplex. Contacts the 5S rRNA. Binds to the 5S rRNA independently of L5 and L18.

This is one of the proteins that binds to the 5S RNA in the ribosome where it forms part of the central protuberance. This Haemophilus influenzae (strain PittGG) protein is Large ribosomal subunit protein bL25.